The primary structure comprises 729 residues: Serine/threonine-protein kinase TBK1 (729 aa).

In terms of domain architecture, Protein kinase spans 9–310 (WLLSDILGQG…ETSDILHRMV (302 aa)). 15-23 (LGQGATANV) is a binding site for ATP. Residue lysine 30 forms a Glycyl lysine isopeptide (Lys-Gly) (interchain with G-Cter in ubiquitin) linkage. Lysine 38 contributes to the ATP binding site. Aspartate 135 acts as the Proton acceptor in catalysis. Serine 172 carries the phosphoserine; by autocatalysis and IKKB modification. The Ubiquitin-like domain maps to 309–385 (MVIHVFSLQQ…ENPIFVVSRE (77 aa)). A Glycyl lysine isopeptide (Lys-Gly) (interchain with G-Cter in ubiquitin) cross-link involves residue lysine 401. Coiled coils occupy residues 407–657 (DLDG…LQET) and 658–713 (LPQK…ILER). At lysine 607 the chain carries N6-methyllysine; by SETD4. The interaction with AZI2, TANK and TBKBP1 stretch occupies residues 621 to 729 (RKMLHLRKQL…DGGLRNVDCL (109 aa)). Lysine 670 participates in a covalent cross-link: Glycyl lysine isopeptide (Lys-Gly) (interchain with G-Cter in ubiquitin). Serine 716 carries the post-translational modification Phosphoserine.

Belongs to the protein kinase superfamily. Ser/Thr protein kinase family. I-kappa-B kinase subfamily. As to quaternary structure, homodimer. Interacts with DDX3X, TIRAP and TRAF2. Part of a ternary complex consisting of TANK, TRAF2 and TBK1. Interacts with AZI2, TANK and TBKBP1; these interactions are mutually exclusive and mediate TBK1 activation. Interacts with GSK3B; this interaction promotes TBK1 self-association and autophosphorylation. Interacts with SIKE1; SIKE1 is associated with TBK1 under physiological condition and dissociated from TBK1 upon viral infection or TLR3 stimulation. Interacts with IRF3, leading to IRF3 phosphorylation. Interacts with RIGI. Interacts with CYLD. Interacts with OPTN and TRAF3. Interacts with SRC. Interacts with the exocyst complex subunit SEC5/EXOC2; this interaction is sufficient to trigger TBK1 activity. Interacts with STING1, leading to STING1 phosphorylation. Interacts with IFIT3 (via N-terminus). Interacts with MAVS; interaction only takes place in the presence of IFIT3 and leads to MAVS phosphorylation. Interacts (via protein kinase domain) with TTLL12 (via TTL domain); the interaction prevents MAVS binding to TBK1. Interacts with TICAM1; this interaction is enhanced in the presence of WDFY1 and leads to TICAM1 phosphorylation. Interacts with TRIM26. Interacts with TRIM23. Interacts with TTC4 and IKBKE. Interacts with HNRNPA2B1. Interacts with DDX3X. Interacts with TRIM14. Interacts with CEP170; efficient complex formation may be dependent on the presence of CCDC61. Interacts with TRAF3IP3. Interacts with HSP90AA1; the interaction mediates TBK1 association with TOMM70. Interacts with TAX1BP1. Interacts with kinase IKBKB; the complex interacts with STAT1, leading to phosphorylation of STAT1 on 'Thr-749' by IKBKB. Interacts with ICOS; this interaction is critical for the maturation of T follicular regulatory cells. Interacts with RNF144B; this interaction prevents TBK1 phosphorylation and subsequent activation. Interacts with ASB8; this interaction promotes TBK1 proteasomal degradation. Forms a ternary complex with ZNF268 and SETD4; the interaction with SETD4 is ZNF268-dependent and leads to TBK1 monomethylation, which enhances its interaction with IRF3 and MAVS. In terms of assembly, (Microbial infection) Interacts with Borna disease virus (BDV) P protein leading to its phosphorylation. (Microbial infection) Interacts with Ebola virus protein VP35. As to quaternary structure, (Microbial infection) Interacts with HCV NS3; this interaction leads to inhibition of cellular antiviral response by blocking necessary interactions between the TBK1 and its substrates IRF3 and IRF7. In terms of assembly, (Microbial infection) Interacts with human herpesvirus 1 protein ICP34.5. (Microbial infection) Interacts with Zika virus non-structural protein 1/NS1 and non-structural protein 4B/NS4B. As to quaternary structure, (Microbial infection) Interacts with SARS-CoV-2 non-structural protein 6; this interaction decreases IRF3 phosphorylation by 57%, which leads to reduced IFN-beta (IFNB) production. Interacts with SARS-CoV-2 helicase; this interaction inhibits TBK1 phosphorylation and decreases IRF3 phosphorylation by 75%, which leads to reduced IFN-beta production. Interacts with SARS-CoV-2 M protein; the interaction promotes TBK1 degradation via 'Lys-48'-linked ubiquitination. In terms of assembly, (Microbial infection) Interacts with human cytomegalovirus protein UL35; this interaction inhibits type I interferon production. (Microbial infection) Interacts with heartland virus NSs; this interaction antagonizes TBK1 phosphorylation and inhibits TBK1-IRF3 interaction and thus the establishment of an antiviral state. As to quaternary structure, (Microbial infection) Interacts (via N-terminus) with Severe fever with thrombocytopenia virus (SFTSV) NSs; this interaction antagonizes TBK1 phosphorylation and sequesters TBK1 in NSs-induced cytoplasmic inclusion bodies thereby inhibiting the IFN responses. Post-translationally, autophosphorylation at Ser-172 activates the kinase, and is an essential step for virus-triggered signaling. Phosphorylated by IKBKB/IKKB at Ser-172. Phosphorylation requires homodimerization and ubiquitination at Lys-30 and Lys-401. Dephosphorylated at Ser-172 by PPM1B and this negatively regulates its role in mediating antiviral response. In terms of processing, 'Lys-63'-linked polyubiquitination by MIB1 after RNA virus infection, or by NRDP1 after LPS stimulation at Lys-30 and Lys-401, participates in kinase activation. 'Lys-48'-linked polyubiquitination at Lys-670 by DTX4 leads to proteasomal degradation. 'Lys-48'-linked polyubiquitination by TRAIP also leads to proteasomal degradation. 'Lys-48'-linked polyubiquitination by TRAF7; leading to proteasomal degradation. 'Lys-63'-linked polyubiquitination by RNF128 at Lys-30 and Lys-401 leads to the activation of antiviral responses. 'Lys-48'-linked polyubiquitination after 'lys-33'-linked deubiquitination by USP38 promotes TBK1 degradation. (Microbial infection) Interaction with SARS-CoV-2 M protein induces 'Lys-48'-linked ubiquitination which leads to proteasomal degradation. Post-translationally, (Microbial infection) Deubiquitinated by Epstein-Barr virus BPLF1 on both 'Lys-48' and 'Lys-63'-linked ubiquitin chains; leading to inhibition of type I interfewron production. In terms of processing, monomethylation at Lys-607 by SETD4 maximizes TBK1 activation and promotes efficient interferon signaling. In terms of tissue distribution, ubiquitous with higher expression in testis. Expressed in the ganglion cells, nerve fiber layer and microvasculature of the retina.

Its subcellular location is the cytoplasm. It catalyses the reaction L-seryl-[protein] + ATP = O-phospho-L-seryl-[protein] + ADP + H(+). It carries out the reaction L-threonyl-[protein] + ATP = O-phospho-L-threonyl-[protein] + ADP + H(+). Functionally, serine/threonine kinase that plays an essential role in regulating inflammatory responses to foreign agents. Following activation of toll-like receptors by viral or bacterial components, associates with TRAF3 and TANK and phosphorylates interferon regulatory factors (IRFs) IRF3 and IRF7 as well as DDX3X. This activity allows subsequent homodimerization and nuclear translocation of the IRFs leading to transcriptional activation of pro-inflammatory and antiviral genes including IFNA and IFNB. In order to establish such an antiviral state, TBK1 form several different complexes whose composition depends on the type of cell and cellular stimuli. Plays a key role in IRF3 activation: acts by first phosphorylating innate adapter proteins MAVS, STING1 and TICAM1 on their pLxIS motif, leading to recruitment of IRF3, thereby licensing IRF3 for phosphorylation by TBK1. Phosphorylated IRF3 dissociates from the adapter proteins, dimerizes, and then enters the nucleus to induce expression of interferons. Thus, several scaffolding molecules including FADD, TRADD, MAVS, AZI2, TANK or TBKBP1/SINTBAD can be recruited to the TBK1-containing-complexes. Under particular conditions, functions as a NF-kappa-B effector by phosphorylating NF-kappa-B inhibitor alpha/NFKBIA, IKBKB or RELA to translocate NF-Kappa-B to the nucleus. Restricts bacterial proliferation by phosphorylating the autophagy receptor OPTN/Optineurin on 'Ser-177', thus enhancing LC3 binding affinity and antibacterial autophagy. Phosphorylates SMCR8 component of the C9orf72-SMCR8 complex, promoting autophagosome maturation. Phosphorylates ATG8 proteins MAP1LC3C and GABARAPL2, thereby preventing their delipidation and premature removal from nascent autophagosomes. Seems to play a role in energy balance regulation by sustaining a state of chronic, low-grade inflammation in obesity, which leads to a negative impact on insulin sensitivity. Attenuates retroviral budding by phosphorylating the endosomal sorting complex required for transport-I (ESCRT-I) subunit VPS37C. Phosphorylates Borna disease virus (BDV) P protein. Plays an essential role in the TLR3- and IFN-dependent control of herpes virus HSV-1 and HSV-2 infections in the central nervous system. Acts both as a positive and negative regulator of the mTORC1 complex, depending on the context: activates mTORC1 in response to growth factors by catalyzing phosphorylation of MTOR, while it limits the mTORC1 complex by promoting phosphorylation of RPTOR. Acts as a positive regulator of the mTORC2 complex by mediating phosphorylation of MTOR, leading to increased phosphorylation and activation of AKT1. Phosphorylates and activates AKT1. Involved in the regulation of TNF-induced RIPK1-mediated cell death, probably acting via CYLD phosphorylation that in turn controls RIPK1 ubiquitination status. Also participates in the differentiation of T follicular regulatory cells together with the receptor ICOS. The protein is Serine/threonine-protein kinase TBK1 of Homo sapiens (Human).